Reading from the N-terminus, the 309-residue chain is Cyclin-dependent kinase B1-1 (309 aa).

One can recognise a Protein kinase domain in the interval 4–301 (YEKLEKVGEG…AKTALDHPYF (298 aa)). Residues 10–18 (VGEGTYGKV) and K33 each bind ATP. The residue at position 15 (Y15) is a Phosphotyrosine. D142 functions as the Proton acceptor in the catalytic mechanism. T176 is modified (phosphothreonine; by CAK).

It belongs to the protein kinase superfamily. CMGC Ser/Thr protein kinase family. CDC2/CDKX subfamily. As to quaternary structure, interacts with CKS1. Interacts with CYCU3-1. Interacts with SIM, SMR1 and SMR2. As to expression, highly expressed in guard cells and stomatal precursor cells of cotyledons. Expressed in roots, stems, flowers and siliques.

It localises to the nucleus. The catalysed reaction is L-seryl-[protein] + ATP = O-phospho-L-seryl-[protein] + ADP + H(+). It carries out the reaction L-threonyl-[protein] + ATP = O-phospho-L-threonyl-[protein] + ADP + H(+). It catalyses the reaction [DNA-directed RNA polymerase] + ATP = phospho-[DNA-directed RNA polymerase] + ADP + H(+). Phosphorylation at Thr-14 or Tyr-15 inactivates the enzyme, while phosphorylation at Thr-176 activates it. Its function is as follows. May control G2/M (mitosis) phase progression. Plays a role in regulating seedling growth in darkness via regulation of hypocotyl cell elongation and cotyledon cell development. Plays a role in stomatal development. Required to suppress endoreduplication. Together with CDKB1-2, promotes both the last division in the stomatal cell lineage as well as the number of stomata. In collaboration with MYB124 and MYB88, restrict the G1/S transition and chloroplast and nuclear number during stomatal formation, and normally maintain fate and developmental progression throughout the stomatal cell lineage. In Arabidopsis thaliana (Mouse-ear cress), this protein is Cyclin-dependent kinase B1-1 (CDKB1-1).